Consider the following 72-residue polypeptide: Conotoxin im23a (72 aa).

An N-terminal signal peptide occupies residues Met1–Gly22. Residues Asp23–Ala28 constitute a propeptide that is removed on maturation. 3 cysteine pairs are disulfide-bonded: Cys34/Cys41, Cys45/Cys55, and Cys56/Cys71.

This sequence belongs to the conotoxin K superfamily. As to expression, expressed by the venom duct.

The protein resides in the secreted. Functionally, neurotoxin that induces excitatory symptoms in mice following intracranial administration. No symptoms are observed after intraperitoneal and intravenous (tail vein) injections. The polypeptide is Conotoxin im23a (Conus imperialis (Imperial cone)).